Here is a 382-residue protein sequence, read N- to C-terminus: Required for respiratory growth protein 1, mitochondrial (382 aa).

The protein belongs to the RRG1 family.

Its subcellular location is the mitochondrion. Functionally, essential for respiratory growth and required for mitochondrial protein synthesis. Required for vacuolar acidification. The sequence is that of Required for respiratory growth protein 1, mitochondrial (RRG1) from Vanderwaltozyma polyspora (strain ATCC 22028 / DSM 70294 / BCRC 21397 / CBS 2163 / NBRC 10782 / NRRL Y-8283 / UCD 57-17) (Kluyveromyces polysporus).